The primary structure comprises 37 residues: Large ribosomal subunit protein bL36 (37 aa).

This sequence belongs to the bacterial ribosomal protein bL36 family.

The polypeptide is Large ribosomal subunit protein bL36 (Caldanaerobacter subterraneus subsp. tengcongensis (strain DSM 15242 / JCM 11007 / NBRC 100824 / MB4) (Thermoanaerobacter tengcongensis)).